The chain runs to 65 residues: MKKEIHPEYVECKVSCACGNTFATKSNKAELRVDICSNCHPFFTGSEKIVDAAGRVEKFKKKYAM.

Residues cysteine 16, cysteine 18, cysteine 36, and cysteine 39 each contribute to the Zn(2+) site.

This sequence belongs to the bacterial ribosomal protein bL31 family. Type A subfamily. Part of the 50S ribosomal subunit. Zn(2+) serves as cofactor.

In terms of biological role, binds the 23S rRNA. The protein is Large ribosomal subunit protein bL31 of Campylobacter jejuni subsp. doylei (strain ATCC BAA-1458 / RM4099 / 269.97).